A 581-amino-acid polypeptide reads, in one-letter code: MKSHIQSLLIQALDALKQQGVIPTDFEARVQVDRTKDKTHGDFATNLAMMLTKVARKNPRELAQLIIDSLPQDSQVAKVEIAGPGFINFFIDENALASQLMAALNDDHLGIQLPEPQTVVVDYSSPNLAKEMHVGHLRSTIIGDSVVRALEFQGHNVIRQNHVGDWGTQFGMLLAYMEELRAENGEQAQMELSDLETFYRAAKVRFDESEDFAIRARKLVVSLQSGDEYCNKLWREFNDISLSHCHDVYERLGVSLTRKDVRGESTYNDDLEQVVKDLDAKGLLSESNGAKVVFQDEFKTKDGDPLPVIIQKADGGYLYATSDLAAMRYRSNVLKADRALYFVDLRQGLHFQQVFKLARTAEFINPDMSLEHMGFGTMNGDDGRPFKTRSGGVVKLVDLLTEADTRALELVRSKNPDMDQAELEKIAKVVGISSVKYADLSKNRASDYIFSFEQMLSFEGNTAPYLLYAYTRVAGIFKRATDIDLSDAKMQLDHDKEKDLGNKLAQFGEVLSRMVTKGQPHALCGYLFELAGAFSSFYEACPVLAAESEEQKKSRLLLSQLTAKTLKQGLDLLGIETLERM.

The short motif at 126–136 (PNLAKEMHVGH) is the 'HIGH' region element.

Belongs to the class-I aminoacyl-tRNA synthetase family. Monomer.

It is found in the cytoplasm. The catalysed reaction is tRNA(Arg) + L-arginine + ATP = L-arginyl-tRNA(Arg) + AMP + diphosphate. This chain is Arginine--tRNA ligase, found in Shewanella sediminis (strain HAW-EB3).